A 377-amino-acid polypeptide reads, in one-letter code: Cytochrome c peroxidase, mitochondrial (377 aa).

Residues 1–17 constitute a mitochondrion transit peptide; sequence MSFRAPNLIRSAAGRRA. His138 functions as the Proton acceptor in the catalytic mechanism. His261 is a binding site for heme b. Trp277 acts as the Tryptophan radical intermediate in catalysis.

It belongs to the peroxidase family. Cytochrome c peroxidase subfamily. As to quaternary structure, forms a one-to-one complex with cytochrome c. It depends on heme b as a cofactor.

The protein localises to the mitochondrion matrix. The protein resides in the mitochondrion intermembrane space. The enzyme catalyses 2 Fe(II)-[cytochrome c] + H2O2 + 2 H(+) = 2 Fe(III)-[cytochrome c] + 2 H2O. Destroys radicals which are normally produced within the cells and which are toxic to biological systems. The chain is Cytochrome c peroxidase, mitochondrial (CCP1) from Cryptococcus neoformans var. neoformans serotype D (strain JEC21 / ATCC MYA-565) (Filobasidiella neoformans).